Reading from the N-terminus, the 217-residue chain is UPF0502 protein VF_A0604 (217 aa).

Belongs to the UPF0502 family.

The protein is UPF0502 protein VF_A0604 of Aliivibrio fischeri (strain ATCC 700601 / ES114) (Vibrio fischeri).